A 156-amino-acid polypeptide reads, in one-letter code: ATP synthase subunit b (156 aa).

Residues 7-29 traverse the membrane as a helical segment; sequence LLGQAIAFALFVWFCMKYVWPPI.

This sequence belongs to the ATPase B chain family. As to quaternary structure, F-type ATPases have 2 components, F(1) - the catalytic core - and F(0) - the membrane proton channel. F(1) has five subunits: alpha(3), beta(3), gamma(1), delta(1), epsilon(1). F(0) has three main subunits: a(1), b(2) and c(10-14). The alpha and beta chains form an alternating ring which encloses part of the gamma chain. F(1) is attached to F(0) by a central stalk formed by the gamma and epsilon chains, while a peripheral stalk is formed by the delta and b chains.

It is found in the cell inner membrane. In terms of biological role, f(1)F(0) ATP synthase produces ATP from ADP in the presence of a proton or sodium gradient. F-type ATPases consist of two structural domains, F(1) containing the extramembraneous catalytic core and F(0) containing the membrane proton channel, linked together by a central stalk and a peripheral stalk. During catalysis, ATP synthesis in the catalytic domain of F(1) is coupled via a rotary mechanism of the central stalk subunits to proton translocation. Its function is as follows. Component of the F(0) channel, it forms part of the peripheral stalk, linking F(1) to F(0). The protein is ATP synthase subunit b of Aliivibrio salmonicida (strain LFI1238) (Vibrio salmonicida (strain LFI1238)).